Here is a 264-residue protein sequence, read N- to C-terminus: Shikimate dehydrogenase (NADP(+)) (264 aa).

Residues 14–16 (SVS) and Thr61 contribute to the shikimate site. Lys65 serves as the catalytic Proton acceptor. 2 residues coordinate shikimate: Asn85 and Asp99. NADP(+) contacts are provided by residues 122 to 126 (GAGGA), 145 to 150 (NRTVSR), and Ala208. Tyr210 serves as a coordination point for shikimate. Gly231 is an NADP(+) binding site.

It belongs to the shikimate dehydrogenase family. As to quaternary structure, homodimer.

It catalyses the reaction shikimate + NADP(+) = 3-dehydroshikimate + NADPH + H(+). Its pathway is metabolic intermediate biosynthesis; chorismate biosynthesis; chorismate from D-erythrose 4-phosphate and phosphoenolpyruvate: step 4/7. Its function is as follows. Involved in the biosynthesis of the chorismate, which leads to the biosynthesis of aromatic amino acids. Catalyzes the reversible NADPH linked reduction of 3-dehydroshikimate (DHSA) to yield shikimate (SA). The protein is Shikimate dehydrogenase (NADP(+)) of Natronomonas pharaonis (strain ATCC 35678 / DSM 2160 / CIP 103997 / JCM 8858 / NBRC 14720 / NCIMB 2260 / Gabara) (Halobacterium pharaonis).